The primary structure comprises 330 residues: Aspartate--ammonia ligase (330 aa).

It belongs to the class-II aminoacyl-tRNA synthetase family. AsnA subfamily.

It localises to the cytoplasm. It carries out the reaction L-aspartate + NH4(+) + ATP = L-asparagine + AMP + diphosphate + H(+). It participates in amino-acid biosynthesis; L-asparagine biosynthesis; L-asparagine from L-aspartate (ammonia route): step 1/1. This is Aspartate--ammonia ligase from Streptococcus pyogenes serotype M2 (strain MGAS10270).